The following is a 401-amino-acid chain: Probable 2,3-bisphosphoglycerate-independent phosphoglycerate mutase (401 aa).

The protein belongs to the BPG-independent phosphoglycerate mutase family. A-PGAM subfamily.

The enzyme catalyses (2R)-2-phosphoglycerate = (2R)-3-phosphoglycerate. It participates in carbohydrate degradation; glycolysis; pyruvate from D-glyceraldehyde 3-phosphate: step 3/5. In terms of biological role, catalyzes the interconversion of 2-phosphoglycerate and 3-phosphoglycerate. The chain is Probable 2,3-bisphosphoglycerate-independent phosphoglycerate mutase from Thermotoga maritima (strain ATCC 43589 / DSM 3109 / JCM 10099 / NBRC 100826 / MSB8).